We begin with the raw amino-acid sequence, 303 residues long: Ferrochelatase (303 aa).

Fe cation contacts are provided by histidine 185 and glutamate 262.

Belongs to the ferrochelatase family.

It is found in the cytoplasm. It carries out the reaction heme b + 2 H(+) = protoporphyrin IX + Fe(2+). It functions in the pathway porphyrin-containing compound metabolism; protoheme biosynthesis; protoheme from protoporphyrin-IX: step 1/1. Catalyzes the ferrous insertion into protoporphyrin IX. This Campylobacter jejuni (strain RM1221) protein is Ferrochelatase.